The chain runs to 260 residues: MKFAALALALLLAVGSHAASMQADAPSQLDHARAVLDVYLTQVKDMSLRAVNQLDDPQYAEFKTNLAQRIEEMYTQIKTLQGSVSPMTDSFYNTVMEVTKDTRESLNVDLEALKSSLAPQNEQLKQVIEKHLNDYRTLLTPIYNDYKTKHDEEMAALKTRLEPVMEELRTKIQANVEETKAVLMPMVETVRTKVTERLESLREVVQPYVQEYKEQMKQMYDQAQTVDTDALRTKITPLVEEIKVKMNAIFEIIAASVTKS.

The first 18 residues, 1–18, serve as a signal peptide directing secretion; the sequence is MKFAALALALLLAVGSHA. Residues 32–63 form a 3 X approximate tandem repeats region; it reads ARAVLDVYLTQVKDMSLRAVNQLDDPQYAEFK. Tandem repeats lie at residues 64–85 and 87–107. The 10 X approximate tandem repeats stretch occupies residues 64-260; sequence TNLAQRIEEM…EIIAASVTKS (197 aa). One copy of the 3; half-length repeat lies at 108–118; the sequence is VDLEALKSSLA. 5 repeat units span residues 119–140, 141–162, 163–184, 185–206, and 207–225. A 9; half-length repeat occupies 226-236; sequence VDTDALRTKIT. Repeat 10 spans residues 237-260; it reads PLVEEIKVKMNAIFEIIAASVTKS.

Belongs to the apolipoprotein A1/A4/E family. Strong expression in liver with lower expression in intestine.

It is found in the secreted. In terms of biological role, participates in the reverse transport of cholesterol from tissues to the liver for excretion by promoting cholesterol efflux from tissues and by acting as a cofactor for the lecithin cholesterol acyltransferase (LCAT). The sequence is that of Apolipoprotein A-I (apoa1) from Sparus aurata (Gilthead sea bream).